We begin with the raw amino-acid sequence, 56 residues long: Ovomucoid (56 aa).

In terms of domain architecture, Kazal-like spans 6–56 (VDCSEYPKPACTMEQRPLCGSDNKTYGNKCNFCNAVVESNGTLTLSHFGKC). Disulfide bonds link C8/C38, C16/C35, and C24/C56. N45 carries N-linked (GlcNAc...) asparagine glycosylation.

The protein localises to the secreted. The polypeptide is Ovomucoid (Afropavo congensis (Congo peafowl)).